Consider the following 142-residue polypeptide: Profilin (142 aa).

It belongs to the profilin family. In terms of assembly, occurs in many kinds of cells as a complex with monomeric actin in a 1:1 ratio. As to expression, expressed specifically in coelomocytes in response to injury.

The protein localises to the cytoplasm. Its subcellular location is the cytoskeleton. Binds to actin and affects the structure of the cytoskeleton. At high concentrations, profilin prevents the polymerization of actin, whereas it enhances it at low concentrations. By binding to PIP2, it inhibits the formation of IP3 and DG. In Strongylocentrotus purpuratus (Purple sea urchin), this protein is Profilin.